A 427-amino-acid polypeptide reads, in one-letter code: Tegument protein VP16 homolog (427 aa).

This sequence belongs to the herpesviridae tegument protein VP16 protein family.

Its subcellular location is the virion tegument. It localises to the host nucleus. In terms of biological role, transcriptional activator of immediate-early (IE) gene products (alpha genes). Acts as a key activator of lytic infection by initiating the lytic program through the assembly of the transcriptional regulatory VP16-induced complex composed of VP16 and two cellular factors, HCFC1 and POU2F1. VP16-induced complex represents a regulatory switch: when it is on, it promotes IE-gene expression and thus lytic infection, and when it is off, it limits IE-gene transcription favoring latent infection. Functionally, may play a role in the aggregation of tegument proteins around nucleocapsids during virus morphogenesis. This Gallus gallus (Chicken) protein is Tegument protein VP16 homolog (MDV061).